The primary structure comprises 82 residues: MKLTCMMIVAVLFLTAWTVVTAEPHSSNVLENLYLKAHHEMENPEASKLNTRDDDCEPPGNFCGMIKIGPPCCSGWCFFACA.

Residues 1 to 22 (MKLTCMMIVAVLFLTAWTVVTA) form the signal peptide. The propeptide occupies 23 to 52 (EPHSSNVLENLYLKAHHEMENPEASKLNTR). Disulfide bonds link C56–C73, C63–C77, and C72–C81.

In terms of tissue distribution, expressed by the venom duct.

The protein localises to the secreted. In terms of biological role, omega-conotoxins act at presynaptic membranes, they bind and block voltage-gated calcium channels (Cav). Acts on high voltage-activated (HVA) calcium currents in molluscan neurons. This is Omega-conotoxin PnVIB from Conus pennaceus (Feathered cone).